The chain runs to 463 residues: NEDD8-activating enzyme E1 catalytic subunit (463 aa).

Ala-2 is subject to N-acetylalanine. The interval 53–70 is interaction with UBE2M N-terminus; it reads HPDFEPSTESLQFLLDTC. Residues 100 to 124 and 148 to 171 contribute to the ATP site; these read DMDT…GRPK and IQDF…SIIA. Interaction with UBE2M N-terminus regions lie at residues 157–161 and 192–217; these read RQFHI and PSSI…LPGM. Positions 227–229 are interaction with NEDD8; sequence LYP. Cys-237 (glycyl thioester intermediate) is an active-site residue. 2 interaction with NAE1 regions span residues 242–248 and 292–295; these read MPRLPEH and YNIR. The interval 331–338 is interaction with UBE2M N-terminus; the sequence is IATSAYIP. The interval 352-357 is interaction with NEDD8; sequence YTYTFE. The tract at residues 368–463 is interaction with UBE2M core domain; that stretch reads SQLPQNIQFS…TVLFKLHFTS (96 aa).

It belongs to the ubiquitin-activating E1 family. UBA3 subfamily. Heterodimer of UBA3 and NAE1. Interacts with NEDD8, UBE2F and UBE2M. Binds ESR1 and ESR2 with bound steroid ligand. Interacts with TBATA. Ubiquitously expressed.

It catalyses the reaction ATP + [NEDD8 protein] + [E1 NEDD8-activating enzyme]-L-cysteine = AMP + diphosphate + [E1 NEDD8-activating enzyme]-S-[NEDD8 protein]-yl-L-cysteine.. It participates in protein modification; protein neddylation. Binding of TP53BP2 to the regulatory subunit NAE1 decreases activity. Its function is as follows. Catalytic subunit of the dimeric UBA3-NAE1 E1 enzyme. E1 activates NEDD8 by first adenylating its C-terminal glycine residue with ATP, thereafter linking this residue to the side chain of the catalytic cysteine, yielding a NEDD8-UBA3 thioester and free AMP. E1 finally transfers NEDD8 to the catalytic cysteine of UBE2M. Down-regulates steroid receptor activity. Necessary for cell cycle progression. This chain is NEDD8-activating enzyme E1 catalytic subunit (UBA3), found in Homo sapiens (Human).